A 521-amino-acid chain; its full sequence is Bifunctional purine biosynthesis protein PurH (521 aa).

The 145-residue stretch at 1-145 (MIKQALISVS…KNHRDVTVVV (145 aa)) folds into the MGS-like domain.

The protein belongs to the PurH family.

The catalysed reaction is (6R)-10-formyltetrahydrofolate + 5-amino-1-(5-phospho-beta-D-ribosyl)imidazole-4-carboxamide = 5-formamido-1-(5-phospho-D-ribosyl)imidazole-4-carboxamide + (6S)-5,6,7,8-tetrahydrofolate. The enzyme catalyses IMP + H2O = 5-formamido-1-(5-phospho-D-ribosyl)imidazole-4-carboxamide. Its pathway is purine metabolism; IMP biosynthesis via de novo pathway; 5-formamido-1-(5-phospho-D-ribosyl)imidazole-4-carboxamide from 5-amino-1-(5-phospho-D-ribosyl)imidazole-4-carboxamide (10-formyl THF route): step 1/1. It functions in the pathway purine metabolism; IMP biosynthesis via de novo pathway; IMP from 5-formamido-1-(5-phospho-D-ribosyl)imidazole-4-carboxamide: step 1/1. The chain is Bifunctional purine biosynthesis protein PurH from Burkholderia orbicola (strain AU 1054).